Reading from the N-terminus, the 857-residue chain is A-kinase anchor protein 1, mitochondrial (857 aa).

Residues 1–29 (MAIQLRSLFPLALPGMLALLGWWWFFSRK) constitute a mitochondrion transit peptide. The residue at position 55 (S55) is a Phosphoserine. A disordered region spans residues 65-121 (VAPTVTQPPGREEQRCVDKPSTEPLALPRTRQVRRRSESSGNLPSVADTRSQPGPCR). A compositionally biased stretch (basic and acidic residues) spans 74–85 (GREEQRCVDKPS). 3 positions are modified to phosphoserine: S101, S103, and S164. The segment covering 103–116 (SSGNLPSVADTRSQ) has biased composition (polar residues). 2 disordered regions span residues 165 to 198 (ALGKTPGRGWPSPYAASGEKARETGGTEGTGDAV) and 260 to 303 (FVEP…VPEN). The span at 286-299 (SDRDLAGELDKDET) shows a compositional bias: basic and acidic residues. Residues 306–319 (IKQAAFQLISQVIL) are PKA-RII subunit binding domain. 3 disordered regions span residues 336-437 (QVHP…NPRG), 466-497 (STSGLEDSCTETISSSGDKAMTPPLPVSTQPF), and 512-554 (EDGW…QAGS). The segment covering 354–379 (PASQETSLGQDTSDPASTRTGATASP) has biased composition (polar residues). A Phosphothreonine modification is found at T401. Residues 466–482 (STSGLEDSCTETISSSG) are compositionally biased toward polar residues. Residue T487 is modified to Phosphothreonine. A phosphoserine mark is found at S527 and S546. Polar residues predominate over residues 545–554 (DSPQSVQAGS). In terms of domain architecture, KH spans 561–625 (LIIWEIEVPK…HHVDKALNLI (65 aa)). Residues 712–771 (PVEITVICAAPGADGAWWRAQVVASYEETNEVEIRYVDYGGYKRVKVDVLRQIRSDFVTL) form the Tudor domain.

As to quaternary structure, interacts with SLC8A3. Interacts with CFAP91. Interacts with CLPB. Interacts with NDUFS1. Highest expression in testis, heart, liver, skeletal muscle, intestine and kidney, followed by brain and lung. No expression in spleen. Isoform 1/D-AKAP1A is expressed predominantly in testis whereas isoform 4/D-AKAP1D is expressed primarily in liver. Expression is decreased in hearts of diabetic mice (at protein level).

It localises to the mitochondrion outer membrane. The protein localises to the mitochondrion. It is found in the endoplasmic reticulum. Differentially targeted protein that binds to type I and II regulatory subunits of protein kinase A. Anchors them to the cytoplasmic face of the mitochondrial outer membrane or allows them to reside in the endoplasmic reticulum. Involved in mitochondrial-mediated antiviral innate immunity. Promotes translocation of NDUFS1 into mitochondria to regulate mitochondrial membrane respiratory chain NADH dehydrogenase (Complex I) activity. Under diabetic conditions, myocardial AKAP1 expression decreases which blocks the translocation of NDUFS1 from the cytosol to mitochondria. Reduction of NDUFS1 in mitochondria decreases ATP production and increases mitochondrial ROS level, which causes mitochondrial dysfunction and cell apoptosis, respectively, thereby leading to cardiac dysfunction. This Mus musculus (Mouse) protein is A-kinase anchor protein 1, mitochondrial.